The sequence spans 373 residues: MKIGIPKEIKNNENRVGLSPSGVHALVEQGHTVLVEKDAGLGSFFEDKDYKDAGADIVSEQSSVWDVEMVIKVKEPLEEEYKYFKEGLILFTYLHLANEEKLTQALVDNKVVGIAYETVQLPDRSLPLLTPMSEVAGRMSAQVGSQFLQKFNGGMGILLGGVPGVPKGKVSIIGGGQAGTNAAKIALGLGANVTILDVNPKRLAELDDLFDGRVNTIMSNPLNIENAVKESDLVIGAVLIPGAKAPSLVTEDMIKQMKDGSVIVDIAIDQGGIFETTDKITTHDDPTYVKHGVVHYAVANMPGAVPRTSTIALNNATLPYAQLLASKGYREAFKANHALSLGLNTYKGHVTHKGVAEAFGLEYTSVEDALKED.

Positions 15 and 74 each coordinate substrate. The Proton donor/acceptor role is filled by histidine 95. Residues serine 133, 177-178 (QA), aspartate 197, serine 219, 238-239 (VL), 266-269 (IAID), and 298-301 (VANM) contribute to the NAD(+) site. Aspartate 269 functions as the Proton donor/acceptor in the catalytic mechanism.

It belongs to the AlaDH/PNT family. As to quaternary structure, homohexamer. Trimer of dimer.

It carries out the reaction L-alanine + NAD(+) + H2O = pyruvate + NH4(+) + NADH + H(+). It functions in the pathway amino-acid degradation; L-alanine degradation via dehydrogenase pathway; NH(3) and pyruvate from L-alanine: step 1/1. In terms of biological role, catalyzes the reversible reductive amination of pyruvate to L-alanine. May play a role in cell wall synthesis as L-alanine is an important constituent of the peptidoglycan layer. This Staphylococcus haemolyticus (strain JCSC1435) protein is Alanine dehydrogenase (ald).